Reading from the N-terminus, the 442-residue chain is GTPase HflX (442 aa).

Residues 186–362 (VLVALAGYTN…ALNRVVLKLP (177 aa)) form the Hflx-type G domain. Residues 192–199 (GYTNAGKS), 217–221 (FTTLD), 238–241 (DTVG), 306–309 (NKID), and 341–343 (SAR) each bind GTP. 2 residues coordinate Mg(2+): Ser-199 and Thr-219.

Belongs to the TRAFAC class OBG-HflX-like GTPase superfamily. HflX GTPase family. As to quaternary structure, monomer. Associates with the 50S ribosomal subunit. Mg(2+) is required as a cofactor.

The protein localises to the cytoplasm. Functionally, GTPase that associates with the 50S ribosomal subunit and may have a role during protein synthesis or ribosome biogenesis. In Thermococcus kodakarensis (strain ATCC BAA-918 / JCM 12380 / KOD1) (Pyrococcus kodakaraensis (strain KOD1)), this protein is GTPase HflX.